The primary structure comprises 562 residues: 2-succinyl-5-enolpyruvyl-6-hydroxy-3-cyclohexene-1-carboxylate synthase (562 aa).

This sequence belongs to the TPP enzyme family. MenD subfamily. As to quaternary structure, homodimer. Requires Mg(2+) as cofactor. Mn(2+) serves as cofactor. Thiamine diphosphate is required as a cofactor.

The catalysed reaction is isochorismate + 2-oxoglutarate + H(+) = 5-enolpyruvoyl-6-hydroxy-2-succinyl-cyclohex-3-ene-1-carboxylate + CO2. It functions in the pathway quinol/quinone metabolism; 1,4-dihydroxy-2-naphthoate biosynthesis; 1,4-dihydroxy-2-naphthoate from chorismate: step 2/7. The protein operates within cofactor biosynthesis; phylloquinone biosynthesis. Catalyzes the thiamine diphosphate-dependent decarboxylation of 2-oxoglutarate and the subsequent addition of the resulting succinic semialdehyde-thiamine pyrophosphate anion to isochorismate to yield 2-succinyl-5-enolpyruvyl-6-hydroxy-3-cyclohexene-1-carboxylate (SEPHCHC). This Thermosynechococcus vestitus (strain NIES-2133 / IAM M-273 / BP-1) protein is 2-succinyl-5-enolpyruvyl-6-hydroxy-3-cyclohexene-1-carboxylate synthase.